We begin with the raw amino-acid sequence, 219 residues long: Ribose-5-phosphate isomerase A (219 aa).

Substrate-binding positions include 28-31 (TGST), 81-84 (DGAD), and 94-97 (KGGG). Glu103 serves as the catalytic Proton acceptor. Lys121 is a binding site for substrate.

The protein belongs to the ribose 5-phosphate isomerase family. In terms of assembly, homodimer.

It carries out the reaction aldehydo-D-ribose 5-phosphate = D-ribulose 5-phosphate. It participates in carbohydrate degradation; pentose phosphate pathway; D-ribose 5-phosphate from D-ribulose 5-phosphate (non-oxidative stage): step 1/1. Functionally, catalyzes the reversible conversion of ribose-5-phosphate to ribulose 5-phosphate. In Pectobacterium carotovorum subsp. carotovorum (strain PC1), this protein is Ribose-5-phosphate isomerase A.